We begin with the raw amino-acid sequence, 238 residues long: Ribosomal RNA small subunit methyltransferase G (238 aa).

Residues glycine 77, phenylalanine 82, 128-129 (AE), and arginine 147 contribute to the S-adenosyl-L-methionine site. Positions 219-238 (KETPNKYPRKPGTPNKLPIE) are disordered.

It belongs to the methyltransferase superfamily. RNA methyltransferase RsmG family.

Its subcellular location is the cytoplasm. Functionally, specifically methylates the N7 position of guanine in position 535 of 16S rRNA. This is Ribosomal RNA small subunit methyltransferase G from Listeria monocytogenes serovar 1/2a (strain ATCC BAA-679 / EGD-e).